The sequence spans 191 residues: Small ribosomal subunit protein eS7 (191 aa).

The residue at position 1 (M1) is an N-acetylmethionine.

It belongs to the eukaryotic ribosomal protein eS7 family.

The protein is Small ribosomal subunit protein eS7 (RPS7) of Brassica oleracea (Wild cabbage).